A 78-amino-acid polypeptide reads, in one-letter code: Pancreatic polypeptide prohormone (78 aa).

A signal peptide spans 1 to 19; the sequence is LLLSTCVALLLQPPLGALG. Tyrosine 55 bears the Tyrosine amide mark.

It belongs to the NPY family.

Its subcellular location is the secreted. In terms of biological role, hormone secreted by pancreatic cells that acts as a regulator of pancreatic and gastrointestinal functions probably by signaling through the G protein-coupled receptor NPY4R2. The chain is Pancreatic polypeptide prohormone (PPY) from Ovis aries (Sheep).